Reading from the N-terminus, the 458-residue chain is Phosphoglucosamine mutase (458 aa).

Ser-106 functions as the Phosphoserine intermediate in the catalytic mechanism. Residues Ser-106, Asp-247, Asp-249, and Asp-251 each contribute to the Mg(2+) site. Ser-106 bears the Phosphoserine mark.

This sequence belongs to the phosphohexose mutase family. Mg(2+) is required as a cofactor. Post-translationally, activated by phosphorylation.

The catalysed reaction is alpha-D-glucosamine 1-phosphate = D-glucosamine 6-phosphate. Catalyzes the conversion of glucosamine-6-phosphate to glucosamine-1-phosphate. In Chlamydia pneumoniae (Chlamydophila pneumoniae), this protein is Phosphoglucosamine mutase.